Consider the following 347-residue polypeptide: Heat-inducible transcription repressor HrcA (347 aa).

It belongs to the HrcA family.

Its function is as follows. Negative regulator of class I heat shock genes (grpE-dnaK-dnaJ and groELS operons). Prevents heat-shock induction of these operons. This is Heat-inducible transcription repressor HrcA from Enterococcus faecalis (strain ATCC 700802 / V583).